Consider the following 292-residue polypeptide: Protease HtpX (292 aa).

2 helical membrane-spanning segments follow: residues 5–25 and 34–54; these read VVLF…VMSV and SGLL…SLLL. Histidine 140 is a Zn(2+) binding site. The active site involves glutamate 141. Residue histidine 144 participates in Zn(2+) binding. Helical transmembrane passes span 155–175 and 193–213; these read LLQG…GGII and IIVF…AMWF. Glutamate 218 contributes to the Zn(2+) binding site.

The protein belongs to the peptidase M48B family. The cofactor is Zn(2+).

Its subcellular location is the cell inner membrane. The polypeptide is Protease HtpX (Xanthomonas campestris pv. campestris (strain B100)).